The primary structure comprises 261 residues: Major biofilm matrix component (261 aa).

The first 27 residues, 1–27, serve as a signal peptide directing secretion; it reads MGMKKKLSLGVASAALGLALVGGGTWA. A disordered region spans residues 241–261; the sequence is DHTDKDGYVKENEKAHSEDKN.

Belongs to the peptidase M73 family. As to quaternary structure, forms fibers. Fibers have variable length and are 10-15 nm width. Interacts with obg (AC P20964) in pull-down experiments.

The protein resides in the secreted. The protein localises to the forespore intermembrane space. Its function is as follows. TasA is the major protein component of the biofilm extracellular matrix. It forms amyloid fibers that bind cells together in the biofilm. Exhibits an antibacterial activity against a variety of Gram-positive and Gram-negative bacteria. In laboratory strains, is also involved in proper spore coat assembly. This Bacillus subtilis (strain 168) protein is Major biofilm matrix component.